The primary structure comprises 250 residues: Non-specific acid phosphatase (250 aa).

The first 20 residues, 1–20, serve as a signal peptide directing secretion; sequence MKSRYLVFFLPLIVAKYTSA.

It belongs to the class A bacterial acid phosphatase family. In terms of assembly, homodimer.

It is found in the periplasm. It carries out the reaction a phosphate monoester + H2O = an alcohol + phosphate. In Salmonella typhimurium (strain LT2 / SGSC1412 / ATCC 700720), this protein is Non-specific acid phosphatase (phoN).